We begin with the raw amino-acid sequence, 181 residues long: Small ribosomal subunit protein cS23 (181 aa).

Residues 1–40 (MLPMSVHPATTPALASRPRVSLPRPSTPSSSSSLVHLKSR) are disordered. A compositionally biased stretch (low complexity) spans 14–36 (LASRPRVSLPRPSTPSSSSSLVH).

The protein belongs to the chloroplast-specific ribosomal protein cS23 family. In terms of assembly, part of the 30S ribosomal subunit.

It localises to the plastid. The protein resides in the chloroplast. Functionally, component of the chloroplast ribosome (chloro-ribosome), a dedicated translation machinery responsible for the synthesis of chloroplast genome-encoded proteins, including proteins of the transcription and translation machinery and components of the photosynthetic apparatus. The sequence is that of Small ribosomal subunit protein cS23 (PSRP3) from Hordeum vulgare (Barley).